We begin with the raw amino-acid sequence, 103 residues long: Large ribosomal subunit protein bL21 (103 aa).

This sequence belongs to the bacterial ribosomal protein bL21 family. As to quaternary structure, part of the 50S ribosomal subunit. Contacts protein L20.

Its function is as follows. This protein binds to 23S rRNA in the presence of protein L20. This is Large ribosomal subunit protein bL21 from Cupriavidus pinatubonensis (strain JMP 134 / LMG 1197) (Cupriavidus necator (strain JMP 134)).